The following is a 386-amino-acid chain: Protein-glutamate methylesterase/protein-glutamine glutaminase (386 aa).

Residues 4-121 (KVLVVDDSAF…ARNRDEAVKT (118 aa)) enclose the Response regulatory domain. Asp-55 carries the post-translational modification 4-aspartylphosphate. Positions 133-161 (PVSRTSARASTPPPVAKQPERSSEPTTAL) are disordered. The 195-residue stretch at 190 to 384 (INRAYQLLAI…KAIMKEVGYS (195 aa)) folds into the CheB-type methylesterase domain. Active-site residues include Ser-202, His-229, and Asp-326.

This sequence belongs to the CheB family. Post-translationally, phosphorylated by CheA. Phosphorylation of the N-terminal regulatory domain activates the methylesterase activity.

The protein resides in the cytoplasm. The catalysed reaction is [protein]-L-glutamate 5-O-methyl ester + H2O = L-glutamyl-[protein] + methanol + H(+). It catalyses the reaction L-glutaminyl-[protein] + H2O = L-glutamyl-[protein] + NH4(+). Functionally, involved in chemotaxis. Part of a chemotaxis signal transduction system that modulates chemotaxis in response to various stimuli. Catalyzes the demethylation of specific methylglutamate residues introduced into the chemoreceptors (methyl-accepting chemotaxis proteins or MCP) by CheR. Also mediates the irreversible deamidation of specific glutamine residues to glutamic acid. The sequence is that of Protein-glutamate methylesterase/protein-glutamine glutaminase from Idiomarina loihiensis (strain ATCC BAA-735 / DSM 15497 / L2-TR).